A 440-amino-acid chain; its full sequence is C4-dicarboxylate TRAP transporter large permease protein DctM (440 aa).

The next 13 helical transmembrane spans lie at 4–24 (LIIFGLLIALMLTGMPISISL), 54–74 (FEIMAIPFFILAGNFLTHGGV), 89–109 (WHGGLGLAGVIACALFAAVSG), 112–132 (PATVVAIGSVILPAMVNQGFP), 148–168 (ILIPPSIVMVMYAVATSGMVV), 181–201 (VGELFMAGVVPGLMLAGFLAF), 230–250 (AAWGLMLIVVVIGGIYAGIFT), 255–275 (AAMSAVYAFFISVFVYKDLTL), 291–311 (MLLYIITNAVLFSFLMAHEGI), 318–338 (WMVNAGLSWWMFLIIVNILLL), 349–369 (IVLIMAPILFPVAVRLGIDPV), 370–390 (HFGIMIVVNMEVGMCHPPVGL), and 410–430 (VWPWLLTMLAFLVLVTYVPAI).

It belongs to the TRAP transporter large permease family. As to quaternary structure, the complex comprises the extracytoplasmic solute receptor protein DctP, and the two transmembrane proteins DctQ and DctM.

It is found in the cell inner membrane. Functionally, part of the tripartite ATP-independent periplasmic (TRAP) transport system DctPQM involved in C4-dicarboxylates uptake. This chain is C4-dicarboxylate TRAP transporter large permease protein DctM, found in Rhodobacter capsulatus (Rhodopseudomonas capsulata).